Reading from the N-terminus, the 4911-residue chain is Histone-lysine N-methyltransferase 2C (4911 aa).

Positions 1-101 (MSSEEDKSVE…EDAEAEVDNS (101 aa)) are disordered. The span at 12-28 (PQPPPPPPEEPGAPAPS) shows a compositional bias: pro residues. A phosphoserine mark is found at Ser28 and Ser46. Positions 34 to 46 (KRPRGRPRKDGAS) form a DNA-binding region, a.T hook. A compositionally biased stretch (basic residues) spans 50–59 (RARKKPRSRG). Positions 64 to 81 (EDEDSMDGLETTETETIV) are enriched in acidic residues. Ser89 carries the post-translational modification Phosphoserine. Residues 92–112 (EDAEAEVDNSKQLIPTLQRSV) are a coiled coil. Ser113 bears the Phosphoserine mark. Positions 164–203 (RNQPSNKKDIDDNSNGTYEKMQNSAPRKQRGQRKERSPQQ) are disordered. Residues 176 to 189 (NSNGTYEKMQNSAP) show a composition bias toward polar residues. A Phosphoserine modification is found at Ser200. A C2HC pre-PHD-type 1; degenerate zinc finger spans residues 227–262 (ELSLVGLPDAIDIQALFDSTGTCWAHHRCVEWSLGV). PHD-type zinc fingers lie at residues 283 to 331 (ERCA…PEHI), 341 to 391 (DANC…CKVC), 388 to 438 (CKVC…CRIC), and 464 to 520 (DNLC…CKHL). The RING-type zinc-finger motif lies at 344–389 (CAVCDSPGDLLDQFFCTTCGQHYHGMCLDIAVTPLKRAGWQCPECK). Residues 436–489 (RICIECGTRSSSQWHHNCLICDNCYQQQDNLCPFCGKCYHPELQKDMLHCNMCK) enclose the DHHC domain. Positions 644–672 (EDKMEVTENIEVVTHQITVQQEQLQLLEE) form a coiled coil. The segment covering 721 to 730 (QGEKEQKENS) has biased composition (basic and acidic residues). The segment at 721-742 (QGEKEQKENSELSTGLMDSEMT) is disordered. At Lys758 the chain carries N6-acetyllysine. The segment covering 763–791 (SSETESSFSSSADISKADVSSSPTPSSDL) has biased composition (low complexity). 3 disordered regions span residues 763-798 (SSETESSFSSSADISKADVSSSPTPSSDLPSHDMLH), 828-864 (PAITKRKFSPGRPRSKQGAWSTHNTVSPPSWSPDISE), and 885-912 (GRGSGFPGKRRPRGAGLSGRGGRGRSKL). The span at 830 to 842 (ITKRKFSPGRPRS) shows a compositional bias: basic residues. Residues 845-856 (GAWSTHNTVSPP) show a composition bias toward polar residues. The residue at position 854 (Ser854) is a Phosphoserine. 3 consecutive PHD-type zinc fingers follow at residues 957–1010 (QDMC…CTVC), 1007–1057 (CTVC…CVWC), and 1084–1139 (LSSC…CRPY). Positions 1215–1324 (AVLQTPPDIQ…LPCRDDGWSE (110 aa)) are disordered. The segment covering 1224 to 1270 (QSEHSRDGEMDDSREGELMDCDGKSESSPEREAVDDETKGVEGTDGV) has biased composition (basic and acidic residues). Ser1301 is modified (phosphoserine). The stretch at 1338–1366 (TESTEKIKKRYRKRKNKLEETFPAYLQEA) forms a coiled coil. Residues 1406 to 1416 (PSLDPLLSSSS) show a composition bias toward low complexity. Disordered regions lie at residues 1406–1431 (PSLDPLLSSSSAPTKSGTHGPADDPL) and 1458–1485 (HSDIGPVTDDPSSLPQPNVNQSSRPLSE). A compositionally biased stretch (polar residues) spans 1467–1482 (DPSSLPQPNVNQSSRP). The residue at position 1508 (Lys1508) is an N6-acetyllysine. Disordered stretches follow at residues 1604–1630 (FNPMASDPNNSWTSSAPTVEGENDTMS) and 1709–2448 (VQMS…SPVA). Polar residues-rich tracts occupy residues 1610–1620 (DPNNSWTSSAP) and 1709–1727 (VQMSNDSMKRQQQQDSIDP). Over residues 1729-1753 (SRIDSELFKDPLKQRESEHEQEWKF) the composition is skewed to basic and acidic residues. The stretch at 1754 to 1787 (RQQMRQKSKQQAKIEATQKLEQVKNEQQQQQQQQ) forms a coiled coil. Lys1772 carries the post-translational modification N6-acetyllysine. Residues 1788 to 1823 (FGSQHLLVQSGSDTPSSGIQSPLTPQPGNGNMSPAQ) show a composition bias toward polar residues. Pro residues predominate over residues 1851-1860 (QAPPPPPAPS). Low complexity predominate over residues 1861–1875 (RIPIQDSLSQAQTSQ). Over residues 1927–1945 (TPLSSVSRPLQMNETTANR) the composition is skewed to polar residues. Ser1987 bears the Phosphoserine mark. Residue Lys2009 is modified to N6-acetyllysine. 4 stretches are compositionally biased toward polar residues: residues 2054–2065 (QDPYGSVSQASR), 2085–2094 (FSHNQSNDPY), 2115–2131 (AFSQPGTISRPTSQDPY), and 2144–2159 (SYSQSSGTARSNTDPY). Low complexity predominate over residues 2173–2187 (PYSQQPQTPRPSTQT). Polar residues-rich tracts occupy residues 2302-2319 (SPMTPRSQSDSFGTSQTA), 2335-2353 (CASSNSPMHSQGQQFSGVS), and 2362-2375 (SGVTDTQNTVNMAQ). Positions 2377-2389 (DTEKLRQRQKLRE) are enriched in basic and acidic residues. The segment covering 2390–2399 (IILQQQQQKK) has biased composition (low complexity). Asymmetric dimethylarginine occurs at positions 2454 and 2571. Disordered stretches follow at residues 2589–2694 (RHGN…SDDP), 2793–2887 (EPKK…RETA), 2925–2954 (EKSDNSDIRPSGSPPPPTLPASPSNHVSSL), and 2989–3029 (VNPG…SGPQ). 2 stretches are compositionally biased toward polar residues: residues 2629–2645 (PPSQQEQGHSVHSSSMV) and 2661–2682 (PLSTSVPSETTSDNLQITTQPS). Residues 2793–2811 (EPKKKEQENKTLVLSDKHS) show a composition bias toward basic and acidic residues. An N6-acetyllysine mark is found at Lys2802 and Lys2809. A compositionally biased stretch (polar residues) spans 2814–2832 (KKSTVTNEVKTEVLSPNSK). Phosphoserine is present on Ser2828. An N6-acetyllysine modification is found at Lys2832. The span at 2833 to 2849 (VESKCETEKNDENKDNV) shows a compositional bias: basic and acidic residues. Polar residues predominate over residues 2851–2860 (TPCSQASAHS). A compositionally biased stretch (basic and acidic residues) spans 2861-2884 (DLNDGEKTSLHPCDPDLFEKRTNR). Lys2867 carries the N6-acetyllysine modification. A compositionally biased stretch (low complexity) spans 3011–3029 (TQTGPQTSQSGTSSMSGPQ). 3 coiled-coil regions span residues 3054-3081 (LLQDLLDQERQEQQQQRQMQAMIRQRSE), 3173-3272 (NDSQ…QQQQ), and 3391-3433 (FSES…EMEQ). Residues 3205-3221 (HRKSKKALSAKQRTAKK) are compositionally biased toward basic residues. Disordered regions lie at residues 3205-3241 (HRKSKKALSAKQRTAKKAGREFPEEDAEQLKHVTEQQ), 3353-3409 (PPIA…EQQE), 3527-3583 (PNFS…HSYP), 3596-3919 (IIPE…MANG), and 4024-4053 (VKEEPPEPVPSPIIPILPSTAGKSSESRRN). Composition is skewed to basic and acidic residues over residues 3222–3238 (AGREFPEEDAEQLKHVT) and 3395–3409 (FQERERKERLREQQE). Polar residues-rich tracts occupy residues 3527–3549 (PNFSSVKQGHGNLSGTSFQQSPV), 3564–3583 (ANSSLPCGQDSTITHGHSYP), 3637–3658 (ISETTSTPAVSTPSELPQQADQ), and 3684–3701 (LPNSDFSQATPNQQTYAN). Positions 3703–3725 (EVDKLSMETPAKTEEIKLEKAET) are enriched in basic and acidic residues. The residue at position 3714 (Lys3714) is an N6-acetyllysine. Ser3758 is subject to Phosphoserine. The segment covering 3803 to 3812 (DCTKDNKLVE) has biased composition (basic and acidic residues). A compositionally biased stretch (polar residues) spans 3878-3892 (MYSSTDTFTHLKQQN). Residues 3897 to 3911 (PPTPPASLPPTPPPM) show a composition bias toward pro residues. A Phosphoserine modification is found at Ser4034. At Arg4139 the chain carries Asymmetric dimethylarginine. Position 4267 is a phosphoserine (Ser4267). The C2HC pre-PHD-type 2 zinc finger occupies 4399-4439 (YRKCCFCHEEGDGLTDGPARLLNLDLDLWVHLNCALWSTEV). The segment at 4460–4507 (MKCVFCHKTGATSGCHRFRCTNIYHFTCAIKAQCMFFKDKTMLCPMHK) adopts a PHD-type 8 zinc-finger fold. The 61-residue stretch at 4545-4605 (DHTFRVGSLI…CRYLCSIEEK (61 aa)) folds into the FYR N-terminal domain. In terms of domain architecture, FYR C-terminal spans 4606–4691 (DGRPVFVIRI…EACENYTFRY (86 aa)). A WDR5 interaction motif (WIN) motif is present at residues 4707–4712 (GCARSE). An SET domain is found at 4771–4887 (SNVYLARSRI…KGEELCYDYK (117 aa)). S-adenosyl-L-methionine contacts are provided by residues Tyr4825 and 4848 to 4849 (NH). Positions 4851, 4899, 4901, and 4906 each coordinate Zn(2+). The region spanning 4895–4911 (HKIPCHCGAVNCRKWMN) is the Post-SET domain.

Belongs to the class V-like SAM-binding methyltransferase superfamily. Histone-lysine methyltransferase family. TRX/MLL subfamily. In terms of assembly, component of the MLL3 complex (also named ASCOM complex), at least composed of catalytic subunit KMT2C/MLL3, ASH2L, RBBP5, WDR5, NCOA6, DPY30, KDM6A, PAXIP1/PTIP, PAGR1 and alpha- and beta-tubulin. Forms a core complex with the evolutionary conserved subcomplex WRAD composed of WDR5, RBBP5, ASH2L/ASH2 and DPY30 subunits; WRAD differentially stimulates the methyltransferase activity. Interacts (via WIN motif) with WDR5. In terms of tissue distribution, highly expressed in testis and ovary, followed by brain and liver. Also expressed in placenta, peripherical blood, fetal thymus, heart, lung and kidney. Within brain, expression was highest in hippocampus, caudate nucleus, and substantia nigra. Not detected in skeletal muscle and fetal liver.

It is found in the nucleus. The enzyme catalyses L-lysyl(4)-[histone H3] + S-adenosyl-L-methionine = N(6)-methyl-L-lysyl(4)-[histone H3] + S-adenosyl-L-homocysteine + H(+). In terms of biological role, histone methyltransferase that catalyzes methyl group transfer from S-adenosyl-L-methionine to the epsilon-amino group of 'Lys-4' of histone H3 (H3K4). Part of chromatin remodeling machinery predominantly forms H3K4me1 methylation marks at active chromatin sites where transcription and DNA repair take place. Likely plays a redundant role with KMT2D in enriching H3K4me1 mark on primed and active enhancer elements. This Homo sapiens (Human) protein is Histone-lysine N-methyltransferase 2C (KMT2C).